Consider the following 341-residue polypeptide: Krueppel-like factor 17 (341 aa).

The disordered stretch occupies residues 214 to 252 (VTESNTQEEPFVREPPTPAPEGAESPSTSRGATRRQSPV). Residues 238 to 252 (SPSTSRGATRRQSPV) show a composition bias toward polar residues. 3 consecutive C2H2-type zinc fingers follow at residues 256–280 (YVCT…QRKH), 286–310 (FACD…KRIH), and 316–338 (HKCD…KRTH).

It belongs to the Sp1 C2H2-type zinc-finger protein family. Exclusively expressed in testis and ovary. Localized to step 3-8 spermatids in testis and growing oocytes in ovary.

The protein localises to the nucleus. Functionally, transcription repressor that binds to the promoter of target genes and prevents their expression. Acts as a negative regulator of epithelial-mesenchymal transition and metastasis in breast cancer. Specifically binds the 5'-CACCC-3' sequence in the promoter of ID1, a key metastasis regulator in breast cancer, and repress its expression. May be a germ cell-specific transcription factor that plays important roles in spermatid differentiation and oocyte development. The polypeptide is Krueppel-like factor 17 (Klf17) (Mus musculus (Mouse)).